Here is a 474-residue protein sequence, read N- to C-terminus: Lactococcin A secretion protein LcnD (474 aa).

Residues 1–21 (MFDKKLLESSELYDKRYRNFS) lie on the Cytoplasmic side of the membrane. Residues 22-44 (TLIILPLFILLVGGVIFTFFAHK) form a helical membrane-spanning segment. Over 45–474 (ELTVISTGSI…LDKIMGRGNQ (430 aa)) the chain is Extracellular.

This sequence belongs to the membrane fusion protein (MFP) (TC 8.A.1) family.

It is found in the cell membrane. Functionally, involved in the secretion of lactococcin A. This is Lactococcin A secretion protein LcnD (lcnD) from Lactococcus lactis subsp. cremoris (Streptococcus cremoris).